Here is a 335-residue protein sequence, read N- to C-terminus: Capsular polysaccharide phosphotransferase WcwK (335 aa).

Belongs to the stealth family.

The chain is Capsular polysaccharide phosphotransferase WcwK (wcwK) from Streptococcus pneumoniae.